Here is a 164-residue protein sequence, read N- to C-terminus: Transcription factor E (164 aa).

In terms of domain architecture, HTH TFE/IIEalpha-type spans 5–87; that stretch reads NDKVIRGYLL…LWRLDFSDIE (83 aa).

It belongs to the TFE family. As to quaternary structure, monomer. Interaction with RNA polymerase subunits RpoF and RpoE is necessary for Tfe stimulatory transcription activity. Able to interact with Tbp and RNA polymerase in the absence of DNA promoter. Interacts both with the preinitiation and elongation complexes.

Functionally, transcription factor that plays a role in the activation of archaeal genes transcribed by RNA polymerase. Facilitates transcription initiation by enhancing TATA-box recognition by TATA-box-binding protein (Tbp), and transcription factor B (Tfb) and RNA polymerase recruitment. Not absolutely required for transcription in vitro, but particularly important in cases where Tbp or Tfb function is not optimal. It dynamically alters the nucleic acid-binding properties of RNA polymerases by stabilizing the initiation complex and destabilizing elongation complexes. Seems to translocate with the RNA polymerase following initiation and acts by binding to the non template strand of the transcription bubble in elongation complexes. The polypeptide is Transcription factor E (Methanosarcina barkeri (strain Fusaro / DSM 804)).